We begin with the raw amino-acid sequence, 205 residues long: Small heat shock protein hspG12 (205 aa).

The region spanning Lys-35–Asn-205 is the sHSP domain. A disordered region spans residues Pro-99–Glu-147. The span at Ala-109–Asp-118 shows a compositional bias: acidic residues. Residues Lys-134–Glu-147 show a composition bias toward basic and acidic residues.

It belongs to the small heat shock protein (HSP20) family.

This is Small heat shock protein hspG12 (hspG12) from Dictyostelium discoideum (Social amoeba).